Reading from the N-terminus, the 450-residue chain is Biotin carboxylase 1 (450 aa).

Positions 1 to 447 constitute a Biotin carboxylation domain; the sequence is MIKKLLIANR…NTKFLETYDV (447 aa). Residues lysine 116, lysine 158, 164–165, 200–203, and histidine 208 each bind ATP; these read GG and EKYI. In terms of domain architecture, ATP-grasp spans 120 to 318; that stretch reads RETMKQAGVP…LIKEQIKVAS (199 aa). Lysine 237 contributes to the hydrogencarbonate binding site. ATP is bound by residues glutamate 275 and glutamate 289. 3 residues coordinate Mg(2+): glutamate 275, glutamate 289, and asparagine 291. Residues glutamate 275, glutamate 289, and asparagine 291 each contribute to the Mn(2+) site. Hydrogencarbonate contacts are provided by arginine 293, valine 296, and arginine 339. Arginine 293 is an active-site residue. Biotin is bound at residue arginine 339.

In terms of assembly, acetyl-CoA carboxylase is a heterohexamer of biotin carboxyl carrier protein, biotin carboxylase and the two subunits of carboxyl transferase in a 2:2 complex. Mg(2+) serves as cofactor. The cofactor is Mn(2+).

It catalyses the reaction N(6)-biotinyl-L-lysyl-[protein] + hydrogencarbonate + ATP = N(6)-carboxybiotinyl-L-lysyl-[protein] + ADP + phosphate + H(+). The protein operates within lipid metabolism; malonyl-CoA biosynthesis; malonyl-CoA from acetyl-CoA: step 1/1. Its function is as follows. This protein is a component of the acetyl coenzyme A carboxylase complex; first, biotin carboxylase catalyzes the carboxylation of the carrier protein and then the transcarboxylase transfers the carboxyl group to form malonyl-CoA. In Bacillus subtilis (strain 168), this protein is Biotin carboxylase 1 (accC1).